We begin with the raw amino-acid sequence, 349 residues long: MAPRILVVDDSAVVRMALSQILGRAGLEVETAIDPLVAMDKMRRARPDAIVLDIEMPRMDGLTFLDRVMAQDPVPVVVCSGLAGPGSEVALHALEHGAVDVIEKPRLGVKGFLEDSARRIVEVVRAATQARLRARVRALRPLPRPPAGAQPRPAPRLAPRAGRAELVVVGASTGGTEALRVLLEAMPADAPAIAVVQHMPEVFTAQFAKRLDKLCRIEVKEAADGDRLLPGRALVAPGNRHLSVKRAGGLVAVVSDGPPVSLHRPSVNVLFHSAARVAGPGTLGILLTGMGDDGADGLLELRRAGAHTVAQDESTSVVFGMPKEAIARGAAVEVLPLPRVASAVLAWAR.

The 116-residue stretch at 4-119 folds into the Response regulatory domain; that stretch reads RILVVDDSAV…KGFLEDSARR (116 aa). Asp53 is modified (4-aspartylphosphate). The 191-residue stretch at 159–349 folds into the CheB-type methylesterase domain; that stretch reads PRAGRAELVV…VASAVLAWAR (191 aa). Catalysis depends on residues Ser172, His198, and Asp293.

Belongs to the CheB family. Post-translationally, phosphorylated by CheA. Phosphorylation of the N-terminal regulatory domain activates the methylesterase activity.

The protein resides in the cytoplasm. The catalysed reaction is [protein]-L-glutamate 5-O-methyl ester + H2O = L-glutamyl-[protein] + methanol + H(+). It carries out the reaction L-glutaminyl-[protein] + H2O = L-glutamyl-[protein] + NH4(+). Involved in chemotaxis. Part of a chemotaxis signal transduction system that modulates chemotaxis in response to various stimuli. Catalyzes the demethylation of specific methylglutamate residues introduced into the chemoreceptors (methyl-accepting chemotaxis proteins or MCP) by CheR. Also mediates the irreversible deamidation of specific glutamine residues to glutamic acid. The protein is Protein-glutamate methylesterase/protein-glutamine glutaminase 1 of Anaeromyxobacter dehalogenans (strain 2CP-C).